A 357-amino-acid polypeptide reads, in one-letter code: Peptide chain release factor 1 (357 aa).

Position 236 is an N5-methylglutamine (Q236).

It belongs to the prokaryotic/mitochondrial release factor family. Post-translationally, methylated by PrmC. Methylation increases the termination efficiency of RF1.

The protein localises to the cytoplasm. In terms of biological role, peptide chain release factor 1 directs the termination of translation in response to the peptide chain termination codons UAG and UAA. The chain is Peptide chain release factor 1 from Mycolicibacterium gilvum (strain PYR-GCK) (Mycobacterium gilvum (strain PYR-GCK)).